Here is a 338-residue protein sequence, read N- to C-terminus: F420-dependent glucose-6-phosphate dehydrogenase (338 aa).

Aspartate 40 is a coenzyme F420-(gamma-Glu)n binding site. Histidine 41 (proton donor) is an active-site residue. Coenzyme F420-(gamma-Glu)n-binding positions include threonine 77 and 108–109; that span reads TG. Residue glutamate 110 is the Proton acceptor of the active site. Coenzyme F420-(gamma-Glu)n is bound by residues asparagine 113, 178 to 179, and 181 to 182; these read GG and VV. 4 residues coordinate substrate: threonine 196, lysine 199, lysine 260, and arginine 284.

It belongs to the F420-dependent glucose-6-phosphate dehydrogenase family. Homodimer.

It catalyses the reaction oxidized coenzyme F420-(gamma-L-Glu)(n) + D-glucose 6-phosphate + H(+) = 6-phospho-D-glucono-1,5-lactone + reduced coenzyme F420-(gamma-L-Glu)(n). Catalyzes the coenzyme F420-dependent oxidation of glucose 6-phosphate (G6P) to 6-phosphogluconolactone. The sequence is that of F420-dependent glucose-6-phosphate dehydrogenase from Gordonia bronchialis (strain ATCC 25592 / DSM 43247 / BCRC 13721 / JCM 3198 / KCTC 3076 / NBRC 16047 / NCTC 10667) (Rhodococcus bronchialis).